We begin with the raw amino-acid sequence, 292 residues long: MSSRIIRATAANSSIRAFVANTTNLVEKARGFHQTSPVASAALGRTLTATSMMGVMLKGEKQKITTKINGGGPLGVILVVGDSEGNVKGYVGNPQVESTNIRPGKLDVGAAVGSDGEITVIKDLGMKKPYVGTAPLVSGEIGEDFATYFLNSEQQPSAVSLGVLIDIDYRIKASGGFIIQVLPNVQEAVLAKLESRIGQLESITVMMEQGMNEVDILNHVLEGMDPKIVETYEVDFECDCNVARFEKGLISIGRQEIREMIEEDENTELVCHFCNKKYHFNKEQLQGLLDEM.

Disulfide bonds link Cys238-Cys240 and Cys271-Cys274.

The protein belongs to the HSP33 family. Post-translationally, under oxidizing conditions two disulfide bonds are formed involving the reactive cysteines. Under reducing conditions zinc is bound to the reactive cysteines and the protein is inactive.

The protein resides in the cytoplasm. Functionally, redox regulated molecular chaperone. Protects both thermally unfolding and oxidatively damaged proteins from irreversible aggregation. Plays an important role in the bacterial defense system toward oxidative stress. This Alkaliphilus metalliredigens (strain QYMF) protein is 33 kDa chaperonin.